The sequence spans 421 residues: Serine hydroxymethyltransferase (421 aa).

(6S)-5,6,7,8-tetrahydrofolate contacts are provided by residues leucine 121 and 125–127 (GHL). Position 230 is an N6-(pyridoxal phosphate)lysine (lysine 230). Residues glutamate 246 and 354–356 (SPF) contribute to the (6S)-5,6,7,8-tetrahydrofolate site.

The protein belongs to the SHMT family. In terms of assembly, homodimer. Requires pyridoxal 5'-phosphate as cofactor.

The protein resides in the cytoplasm. It carries out the reaction (6R)-5,10-methylene-5,6,7,8-tetrahydrofolate + glycine + H2O = (6S)-5,6,7,8-tetrahydrofolate + L-serine. It functions in the pathway one-carbon metabolism; tetrahydrofolate interconversion. The protein operates within amino-acid biosynthesis; glycine biosynthesis; glycine from L-serine: step 1/1. In terms of biological role, catalyzes the reversible interconversion of serine and glycine with tetrahydrofolate (THF) serving as the one-carbon carrier. This reaction serves as the major source of one-carbon groups required for the biosynthesis of purines, thymidylate, methionine, and other important biomolecules. Also exhibits THF-independent aldolase activity toward beta-hydroxyamino acids, producing glycine and aldehydes, via a retro-aldol mechanism. The polypeptide is Serine hydroxymethyltransferase (Rickettsia felis (strain ATCC VR-1525 / URRWXCal2) (Rickettsia azadi)).